The sequence spans 104 residues: Circadian clock oscillator protein KaiB (104 aa).

This sequence belongs to the KaiB family. As to quaternary structure, the KaiABC complex composition changes during the circadian cycle to control KaiC phosphorylation. Complexes KaiC(6), KaiA(2-4):KaiC(6), KaiB(6):KaiC(6) and KaiC(6):KaiB(6):KaiA(12) are among the most important forms, many form cooperatively. Undergoes a major conformational rearrangment; in the free state forms homotetramers as a dimer of dimers. When bound to the CI domain of KaiC switches to a monomeric thioredoxin-fold (KaiB(fs)). KaiB(fs) binds CikA, leading it to dephosphorylate phospho-RpaA.

Its function is as follows. Key component of the KaiABC oscillator complex, which constitutes the main circadian regulator in cyanobacteria. Complex composition changes during the circadian cycle to control KaiC phosphorylation. KaiA stimulates KaiC autophosphorylation, while KaiB sequesters KaiA, leading to KaiC autodephosphorylation. Phospho-Ser-431 KaiC accumulation triggers binding of KaiB to form the KaiB(6):KaiC(6) complex, leading to changes in output regulators CikA and SasA. KaiB switches to a thioredoxin-like fold (KaiB(fs)) when bound to KaiC. KaiB(6):KaiC(6) formation exposes a site for KaiA binding that sequesters KaiA from KaiC, making the KaiC(6):KaiB(6):KaiA(12) complex that results in KaiC autodephosphorylation. Functionally, a metamorphic protein which reversibly switches between an inactive tetrameric fold and a rare, thioredoxin-like monomeric fold (KaiB(fs)). KaiB(fs) binds phospho-KaiC, KaiA and CikA. KaiA and CikA compete for binding to KaiB(fs), and KaiB(fs) and SasA compete for binding to KaiC, thus the clock oscillator and output signal pathway are tightly coupled. The sequence is that of Circadian clock oscillator protein KaiB from Trichodesmium erythraeum (strain IMS101).